The chain runs to 179 residues: MLKPNNSWMWYFDLKDNSLMLDLGSDMVFRVGIPAKHLIPSASEQCEFTVDDASIFQNYKENVSHLEISEPRKAELALNAVAASRFHKPMMPKSWFFDTQSVSCDPENSDIVTLQTPLGMAKFIVIENSGCASLCMMVDVEPLALSSTKEIRFCDTIKVMNNRITAYEEDAILNLALVG.

Belongs to the ZapC family. In terms of assembly, interacts directly with FtsZ.

It is found in the cytoplasm. Its function is as follows. Contributes to the efficiency of the cell division process by stabilizing the polymeric form of the cell division protein FtsZ. Acts by promoting interactions between FtsZ protofilaments and suppressing the GTPase activity of FtsZ. The polypeptide is Cell division protein ZapC (Photobacterium profundum (strain SS9)).